A 200-amino-acid chain; its full sequence is Glycerol-3-phosphate acyltransferase (200 aa).

Transmembrane regions (helical) follow at residues 1–21 (MLLS…MPNG), 53–73 (GPAL…VLLA), 81–101 (WVQV…VWLG), 114–134 (MFLG…MAVI), and 139–159 (IVSL…LTSG).

Belongs to the PlsY family. Probably interacts with PlsX.

The protein localises to the cell inner membrane. The catalysed reaction is an acyl phosphate + sn-glycerol 3-phosphate = a 1-acyl-sn-glycero-3-phosphate + phosphate. The protein operates within lipid metabolism; phospholipid metabolism. In terms of biological role, catalyzes the transfer of an acyl group from acyl-phosphate (acyl-PO(4)) to glycerol-3-phosphate (G3P) to form lysophosphatidic acid (LPA). This enzyme utilizes acyl-phosphate as fatty acyl donor, but not acyl-CoA or acyl-ACP. This Synechococcus sp. (strain CC9902) protein is Glycerol-3-phosphate acyltransferase.